The following is a 1300-amino-acid chain: ATP-dependent RNA helicase HrpA (1300 aa).

Residues 87–250 form the Helicase ATP-binding domain; sequence LEAIRDHQVV…FNNAPIIEVS (164 aa). Residue 100 to 107 coordinates ATP; sequence GETGSGKT. The DEAH box motif lies at 197-200; the sequence is DEAH. Residues 274 to 444 enclose the Helicase C-terminal domain; it reads QLQAIFDAVD…SVILQMTALG (171 aa).

It belongs to the DEAD box helicase family. DEAH subfamily.

It catalyses the reaction ATP + H2O = ADP + phosphate + H(+). Its function is as follows. Not yet known. The protein is ATP-dependent RNA helicase HrpA (hrpA) of Escherichia coli (strain K12).